The sequence spans 268 residues: MALTKLSLVLFLCFLGLYSETVKSQNCGCAPNLCCSQFGYCGSTDAYCGTGCRSGPCRSPGGTPSPPGGGSVGSIVTQAFFNGIINQAGGGCAGKNFYTRDSFINAANTFPNFANSVTRREIATMFAHFTHETGHFCYIEEINGASRDYCDENNRQYPCAPGKGYFGRGPIQLSWNYNYGACGQSLNLNLLGQPELVSSNPTVAFRTGLWFWMNSVRPVLNQGFGATIRAINGMECNGGNSGAVNARIRYYRDYCGQLGVDPGPNLSC.

The signal sequence occupies residues 1-24 (MALTKLSLVLFLCFLGLYSETVKS). The region spanning 25–59 (QNCGCAPNLCCSQFGYCGSTDAYCGTGCRSGPCRS) is the Chitin-binding type-1 domain. Intrachain disulfides connect Cys27-Cys35, Cys29-Cys41, Cys34-Cys48, Cys52-Cys57, Cys92-Cys137, Cys150-Cys159, and Cys236-Cys268. Residues 71–268 (SVGSIVTQAF…GVDPGPNLSC (198 aa)) are catalytic. Residue Glu132 is the Proton donor of the active site. Asn265 carries an N-linked (GlcNAc...) asparagine glycan.

This sequence belongs to the glycosyl hydrolase 19 family. Chitinase class I subfamily.

It localises to the secreted. It is found in the extracellular space. It catalyses the reaction Random endo-hydrolysis of N-acetyl-beta-D-glucosaminide (1-&gt;4)-beta-linkages in chitin and chitodextrins.. Defense against chitin-containing fungal pathogens. This Brassica napus (Rape) protein is Basic endochitinase CHB4.